A 77-amino-acid polypeptide reads, in one-letter code: UPF0401 protein c0279 (77 aa).

The protein belongs to the UPF0401 family.

The chain is UPF0401 protein c0279 from Escherichia coli O6:H1 (strain CFT073 / ATCC 700928 / UPEC).